We begin with the raw amino-acid sequence, 351 residues long: Phosphoribosylformylglycinamidine cyclo-ligase (351 aa).

It belongs to the AIR synthase family.

The protein localises to the cytoplasm. The enzyme catalyses 2-formamido-N(1)-(5-O-phospho-beta-D-ribosyl)acetamidine + ATP = 5-amino-1-(5-phospho-beta-D-ribosyl)imidazole + ADP + phosphate + H(+). It functions in the pathway purine metabolism; IMP biosynthesis via de novo pathway; 5-amino-1-(5-phospho-D-ribosyl)imidazole from N(2)-formyl-N(1)-(5-phospho-D-ribosyl)glycinamide: step 2/2. This Lysinibacillus sphaericus (strain C3-41) protein is Phosphoribosylformylglycinamidine cyclo-ligase.